Here is a 189-residue protein sequence, read N- to C-terminus: Isopentenyl-diphosphate Delta-isomerase (189 aa).

The Mn(2+) site is built by His-27 and His-34. In terms of domain architecture, Nudix hydrolase spans 32–171 (PLHFAFSTYI…PFVFSPWMVD (140 aa)). Cys-69 is a catalytic residue. Position 71 (His-71) interacts with Mn(2+). Glu-89 contributes to the Mg(2+) binding site. Residues Glu-119 and Glu-121 each coordinate Mn(2+). Glu-121 is a catalytic residue.

This sequence belongs to the IPP isomerase type 1 family. Mg(2+) serves as cofactor. The cofactor is Mn(2+).

The protein localises to the cytoplasm. It carries out the reaction isopentenyl diphosphate = dimethylallyl diphosphate. It functions in the pathway isoprenoid biosynthesis; dimethylallyl diphosphate biosynthesis; dimethylallyl diphosphate from isopentenyl diphosphate: step 1/1. In terms of biological role, catalyzes the 1,3-allylic rearrangement of the homoallylic substrate isopentenyl (IPP) to its highly electrophilic allylic isomer, dimethylallyl diphosphate (DMAPP). This Corynebacterium glutamicum (strain R) protein is Isopentenyl-diphosphate Delta-isomerase.